The following is an 86-amino-acid chain: Large ribosomal subunit protein bL31B (86 aa).

It belongs to the bacterial ribosomal protein bL31 family. Type B subfamily. As to quaternary structure, part of the 50S ribosomal subunit.

In Streptococcus equi subsp. zooepidemicus (strain H70), this protein is Large ribosomal subunit protein bL31B.